Here is a 177-residue protein sequence, read N- to C-terminus: ATP synthase subunit delta (177 aa).

The protein belongs to the ATPase delta chain family. F-type ATPases have 2 components, F(1) - the catalytic core - and F(0) - the membrane proton channel. F(1) has five subunits: alpha(3), beta(3), gamma(1), delta(1), epsilon(1). F(0) has three main subunits: a(1), b(2) and c(10-14). The alpha and beta chains form an alternating ring which encloses part of the gamma chain. F(1) is attached to F(0) by a central stalk formed by the gamma and epsilon chains, while a peripheral stalk is formed by the delta and b chains.

It localises to the cell inner membrane. F(1)F(0) ATP synthase produces ATP from ADP in the presence of a proton or sodium gradient. F-type ATPases consist of two structural domains, F(1) containing the extramembraneous catalytic core and F(0) containing the membrane proton channel, linked together by a central stalk and a peripheral stalk. During catalysis, ATP synthesis in the catalytic domain of F(1) is coupled via a rotary mechanism of the central stalk subunits to proton translocation. Functionally, this protein is part of the stalk that links CF(0) to CF(1). It either transmits conformational changes from CF(0) to CF(1) or is implicated in proton conduction. The protein is ATP synthase subunit delta of Klebsiella pneumoniae subsp. pneumoniae (strain ATCC 700721 / MGH 78578).